A 364-amino-acid polypeptide reads, in one-letter code: Probable UDP-arabinopyranose mutase 1 (364 aa).

The DXD motif signature appears at 103–105; the sequence is DDD. N-linked (Glc...) arginine glycosylation occurs at R151.

Belongs to the RGP family. As to quaternary structure, homopentamer or homohexamer. Mn(2+) serves as cofactor. It depends on Mg(2+) as a cofactor. Reversibly glycosylated by UDP-glucose, UDP-xylose and UDP-galactose, but not UDP-mannose.

Its subcellular location is the secreted. It is found in the cell wall. The protein resides in the cell junction. The protein localises to the plasmodesma. It localises to the golgi apparatus. It catalyses the reaction UDP-beta-L-arabinofuranose = UDP-beta-L-arabinopyranose. Inhibited by inhibitor protein (IP) which may be a form of sucrose synthase. Its function is as follows. Probable UDP-L-arabinose mutase involved in the biosynthesis of cell wall non-cellulosic polysaccharides. Was initially shown to possess an autoglycosylating activity which is dependent on the presence of UDP-glucose and manganese. In Pisum sativum (Garden pea), this protein is Probable UDP-arabinopyranose mutase 1.